The chain runs to 159 residues: NADH-quinone oxidoreductase subunit B (159 aa).

Residues Cys-36, Cys-37, Cys-102, and Cys-132 each contribute to the [4Fe-4S] cluster site.

The protein belongs to the complex I 20 kDa subunit family. NDH-1 is composed of 14 different subunits. Subunits NuoB, C, D, E, F, and G constitute the peripheral sector of the complex. [4Fe-4S] cluster serves as cofactor.

The protein resides in the cell inner membrane. The catalysed reaction is a quinone + NADH + 5 H(+)(in) = a quinol + NAD(+) + 4 H(+)(out). NDH-1 shuttles electrons from NADH, via FMN and iron-sulfur (Fe-S) centers, to quinones in the respiratory chain. Couples the redox reaction to proton translocation (for every two electrons transferred, four hydrogen ions are translocated across the cytoplasmic membrane), and thus conserves the redox energy in a proton gradient. This chain is NADH-quinone oxidoreductase subunit B, found in Delftia acidovorans (strain DSM 14801 / SPH-1).